Consider the following 132-residue polypeptide: uncharacterized protein (132 aa).

Positions 1 to 68 are disordered; that stretch reads MCSAGELLRG…HTGEPVGDDY (68 aa). The chain crosses the membrane as a helical span at residues 100–120; sequence VIVIFFWVMLWFLGLQALGLV.

Belongs to the FAM241 family.

The protein localises to the membrane. This is an uncharacterized protein from Homo sapiens (Human).